We begin with the raw amino-acid sequence, 621 residues long: MSNQEYTFQTEINQLLDLMIHSLYSNKEIFLRELISNASDALDKLNYLMLTDEKLKGLNITPSIHLSFDSQKKTLTIKDNGIGMDKNDLIEHLGTIAKSGTKSFLSALSGDKKKDSALIGQFGVGFYSAFMVASKIVVQTKKVTNHQAYAWVSDGKGKFEISECVKEEQGTEITLFLKEEDSHFASRWEIDGIVKKYSEHIPFPIFLTYTDTKFEGEGDHKKEVKEEKCDQINQASALWKMNKSELKDKDYKDFYQSFAHDNSEPLSYIHNKVEGSLEYTTLFYIPSKAPFDMFRVDYKSGVKLYVKRVFITDDDKELLPSYLRFVKGVIDSEDLPLNVSREILQQNKILANIRSASVKKILSEIERLSKDEKNYHKFYEPFGKVLKEGLYGDFENKEKLLELLRFYSKDKEKLISLKEYRENLKENQKSIYYLLGENLDLLKASPLLEKYAQKGYDVLLLSDEIDAFVMPGVNEYDKTPFRDASHSESLKELGLEEINDEVKDQFKDLMKAFEENLKDEIKGVELSSHLTSAVALIGDEQNAMMANFMRQMGQSVPESKKTLELNPNHAILQKLLKCEDKEQLSAFIWLLYDGAKLLEKGALKDAKSFNERLNSVLLKAL.

Residues 1–341 (MSNQEYTFQT…SEDLPLNVSR (341 aa)) are a; substrate-binding. The tract at residues 342–547 (EILQQNKILA…GDEQNAMMAN (206 aa)) is b. The c stretch occupies residues 548 to 621 (FMRQMGQSVP…RLNSVLLKAL (74 aa)).

This sequence belongs to the heat shock protein 90 family. Homodimer.

It is found in the cytoplasm. Its function is as follows. Molecular chaperone. Has ATPase activity. The polypeptide is Chaperone protein HtpG (Helicobacter pylori (strain HPAG1)).